Here is a 269-residue protein sequence, read N- to C-terminus: 2-dehydro-3-deoxyphosphooctonate aldolase (269 aa).

Belongs to the KdsA family.

The protein localises to the cytoplasm. The catalysed reaction is D-arabinose 5-phosphate + phosphoenolpyruvate + H2O = 3-deoxy-alpha-D-manno-2-octulosonate-8-phosphate + phosphate. It functions in the pathway carbohydrate biosynthesis; 3-deoxy-D-manno-octulosonate biosynthesis; 3-deoxy-D-manno-octulosonate from D-ribulose 5-phosphate: step 2/3. It participates in bacterial outer membrane biogenesis; lipopolysaccharide biosynthesis. This chain is 2-dehydro-3-deoxyphosphooctonate aldolase, found in Chlamydia trachomatis serovar A (strain ATCC VR-571B / DSM 19440 / HAR-13).